A 398-amino-acid chain; its full sequence is Cell adhesion molecule 3 (398 aa).

Residues 1-24 form the signal peptide; the sequence is MGAPAASLLLLLLLFACCWAPGGA. One can recognise an Ig-like V-type domain in the interval 25–126; that stretch reads NLSQDDSQPW…VRTAKSLVTV (102 aa). The Extracellular segment spans residues 25-330; it reads NLSQDDSQPW…PVPSSSSTYH (306 aa). Intrachain disulfides connect C50–C110, C152–C209, and C254–C299. 2 Ig-like C2-type domains span residues 130-228 and 233-315; these read PQKP…QRIE and PTAM…YTLN. N290 carries N-linked (GlcNAc...) asparagine glycosylation. A helical transmembrane segment spans residues 331–351; it reads AIIGGIVAFIVFLLLIMLIFL. Topologically, residues 352–398 are cytoplasmic; that stretch reads GHYLIRHKGTYLTHEAKGSDDAPDADTAIINAEGGQSGGDDKKEYFI. Positions 367 to 398 are disordered; sequence AKGSDDAPDADTAIINAEGGQSGGDDKKEYFI. Phosphoserine is present on S388.

Belongs to the nectin family. In terms of assembly, homodimer. Can form trans-heterodimers with NECTIN3. Interacts with EPB41L1, DLG3, PALS2 and CASK. In terms of tissue distribution, isoform 1 is expressed mainly in adult and fetal brain. Isoform 2 is highly expressed in adult brain and weakly expressed in placenta. In brain, Isoform 2 is highly expressed in cerebellum.

It localises to the cell membrane. The protein resides in the cell junction. Functionally, involved in cell-cell adhesion. Has both calcium-independent homophilic cell-cell adhesion activity and calcium-independent heterophilic cell-cell adhesion activity with IGSF4, NECTIN1 and NECTIN3. Interaction with EPB41L1 may regulate structure or function of cell-cell junctions. The protein is Cell adhesion molecule 3 (CADM3) of Homo sapiens (Human).